A 199-amino-acid polypeptide reads, in one-letter code: Imidazoleglycerol-phosphate dehydratase (199 aa).

This sequence belongs to the imidazoleglycerol-phosphate dehydratase family.

The protein resides in the cytoplasm. The enzyme catalyses D-erythro-1-(imidazol-4-yl)glycerol 3-phosphate = 3-(imidazol-4-yl)-2-oxopropyl phosphate + H2O. Its pathway is amino-acid biosynthesis; L-histidine biosynthesis; L-histidine from 5-phospho-alpha-D-ribose 1-diphosphate: step 6/9. The polypeptide is Imidazoleglycerol-phosphate dehydratase (Kineococcus radiotolerans (strain ATCC BAA-149 / DSM 14245 / SRS30216)).